A 197-amino-acid polypeptide reads, in one-letter code: Proteasome subunit beta 1 (197 aa).

Positions 1 to 6 (MNRKTG) are cleaved as a propeptide — removed in mature form; by autocatalysis. Threonine 7 functions as the Nucleophile in the catalytic mechanism.

Belongs to the peptidase T1B family. As to quaternary structure, the 20S proteasome core is composed of 14 alpha and 14 beta subunits that assemble into four stacked heptameric rings, resulting in a barrel-shaped structure. The two inner rings, each composed of seven catalytic beta subunits, are sandwiched by two outer rings, each composed of seven alpha subunits. The catalytic chamber with the active sites is on the inside of the barrel. Has a gated structure, the ends of the cylinder being occluded by the N-termini of the alpha-subunits. Is capped at one or both ends by the proteasome regulatory ATPase, PAN.

The protein resides in the cytoplasm. It catalyses the reaction Cleavage of peptide bonds with very broad specificity.. Its activity is regulated as follows. The formation of the proteasomal ATPase PAN-20S proteasome complex, via the docking of the C-termini of PAN into the intersubunit pockets in the alpha-rings, triggers opening of the gate for substrate entry. Interconversion between the open-gate and close-gate conformations leads to a dynamic regulation of the 20S proteasome proteolysis activity. Component of the proteasome core, a large protease complex with broad specificity involved in protein degradation. The protein is Proteasome subunit beta 1 of Pyrococcus horikoshii (strain ATCC 700860 / DSM 12428 / JCM 9974 / NBRC 100139 / OT-3).